Here is a 141-residue protein sequence, read N- to C-terminus: Nucleoside diphosphate kinase (141 aa).

Residues Lys-11, Phe-59, Arg-87, Thr-93, Arg-104, and Asn-114 each coordinate ATP. His-117 functions as the Pros-phosphohistidine intermediate in the catalytic mechanism.

It belongs to the NDK family. In terms of assembly, homotetramer. The cofactor is Mg(2+).

It is found in the cytoplasm. The enzyme catalyses a 2'-deoxyribonucleoside 5'-diphosphate + ATP = a 2'-deoxyribonucleoside 5'-triphosphate + ADP. The catalysed reaction is a ribonucleoside 5'-diphosphate + ATP = a ribonucleoside 5'-triphosphate + ADP. Its function is as follows. Major role in the synthesis of nucleoside triphosphates other than ATP. The ATP gamma phosphate is transferred to the NDP beta phosphate via a ping-pong mechanism, using a phosphorylated active-site intermediate. This is Nucleoside diphosphate kinase from Paraburkholderia xenovorans (strain LB400).